The primary structure comprises 577 residues: MTEMLKGIAASDGVAVAKAYLLVQPDLSFETVTVEDTSAEEARLDAALKASQDELSIIREKAVETLGEEAAAVFDAHLMVLADPEMISQIKETIRAKQTNAEAGLKEVTDMFITIFEGMEDNPYMQERAADIRDVAKRVLAHLLGAKLPNPATIDEESIVIAHDLTPSDTAQLNKQFVKAFVTNIGGRTSHSAIMARTLEIAAVLGTNDITSRVKDGDIVAVNGITGEVIINPTDEQVAEFKAAGEAYAKQKAEWALLKDAKTVTADGKHFELAANIGTPKDVEGVNANGAEAVGLYRTEFLYMDSQDFPTEDEQYEAYKAVLEGMNGKPVVVRTMDIGGDKELPYLDLPKEMNPFLGFRALRISISETGNAMFRTQIRALLRASVHGQLRIMFPMVALLKEFRAAKAIFDEEKANLKAEGVAVSDDIQVGIMIEIPAAAMLADQFAKEVDFFSIGTNDLIQYTMAADRMNEQVSYLYQPYNPSILRLINNVIKAAHAEGKWVGMCGEMAGDQKAVPLLVEMGLDEFSMSATSILRTRSLMKKLDTAKMQEYANRALTECSTMEEVLELSKEYVNVD.

Histidine 191 functions as the Tele-phosphohistidine intermediate in the catalytic mechanism. Positions 298 and 334 each coordinate phosphoenolpyruvate. Mg(2+)-binding residues include glutamate 435 and aspartate 459. Residues 458-459 (ND) and arginine 469 contribute to the phosphoenolpyruvate site. Cysteine 506 (proton donor) is an active-site residue.

The protein belongs to the PEP-utilizing enzyme family. In terms of assembly, homodimer. The cofactor is Mg(2+).

It is found in the cytoplasm. The enzyme catalyses L-histidyl-[protein] + phosphoenolpyruvate = N(pros)-phospho-L-histidyl-[protein] + pyruvate. Its function is as follows. General (non sugar-specific) component of the phosphoenolpyruvate-dependent sugar phosphotransferase system (sugar PTS). This major carbohydrate active-transport system catalyzes the phosphorylation of incoming sugar substrates concomitantly with their translocation across the cell membrane. Enzyme I transfers the phosphoryl group from phosphoenolpyruvate (PEP) to the phosphoryl carrier protein (HPr). In Streptococcus equinus (Streptococcus bovis), this protein is Phosphoenolpyruvate-protein phosphotransferase (ptsI).